A 182-amino-acid chain; its full sequence is Dynactin subunit 5 (182 aa).

Methionine 1 is subject to N-acetylmethionine.

The protein belongs to the dynactin subunits 5/6 family. Dynactin subunit 5 subfamily. Subunit of dynactin, a multiprotein complex part of a tripartite complex with dynein and a adapter, such as BICDL1, BICD2 or HOOK3. The dynactin complex is built around ACTR1A/ACTB filament and consists of an actin-related filament composed of a shoulder domain, a pointed end and a barbed end. Its length is defined by its flexible shoulder domain. The soulder is composed of 2 DCTN1 subunits, 4 DCTN2 and 2 DCTN3. The 4 DCNT2 (via N-terminus) bind the ACTR1A filament and act as molecular rulers to determine the length. The pointed end is important for binding dynein-dynactin cargo adapters. Consists of 4 subunits: ACTR10, DCNT4, DCTN5 and DCTN6. Within the complex DCTN6 forms a heterodimer with DCTN5. The barbed end is composed of a CAPZA1:CAPZB heterodimers, which binds ACTR1A/ACTB filament and dynactin and stabilizes dynactin. Interacts with N4BP2L1.

Its subcellular location is the cytoplasm. It localises to the cytoskeleton. The protein localises to the chromosome. The protein resides in the centromere. It is found in the kinetochore. Functionally, part of the dynactin complex that activates the molecular motor dynein for ultra-processive transport along microtubules. This chain is Dynactin subunit 5 (DCTN5), found in Pongo abelii (Sumatran orangutan).